The sequence spans 253 residues: Ubiquinone/menaquinone biosynthesis C-methyltransferase UbiE (253 aa).

Residues Thr-76, Asp-97, 125–126 (NA), and Ser-142 each bind S-adenosyl-L-methionine.

This sequence belongs to the class I-like SAM-binding methyltransferase superfamily. MenG/UbiE family.

The enzyme catalyses a 2-demethylmenaquinol + S-adenosyl-L-methionine = a menaquinol + S-adenosyl-L-homocysteine + H(+). It carries out the reaction a 2-methoxy-6-(all-trans-polyprenyl)benzene-1,4-diol + S-adenosyl-L-methionine = a 5-methoxy-2-methyl-3-(all-trans-polyprenyl)benzene-1,4-diol + S-adenosyl-L-homocysteine + H(+). It functions in the pathway quinol/quinone metabolism; menaquinone biosynthesis; menaquinol from 1,4-dihydroxy-2-naphthoate: step 2/2. Its pathway is cofactor biosynthesis; ubiquinone biosynthesis. Functionally, methyltransferase required for the conversion of demethylmenaquinol (DMKH2) to menaquinol (MKH2) and the conversion of 2-polyprenyl-6-methoxy-1,4-benzoquinol (DDMQH2) to 2-polyprenyl-3-methyl-6-methoxy-1,4-benzoquinol (DMQH2). This chain is Ubiquinone/menaquinone biosynthesis C-methyltransferase UbiE, found in Xylella fastidiosa (strain M23).